A 314-amino-acid chain; its full sequence is Methionyl-tRNA formyltransferase (314 aa).

(6S)-5,6,7,8-tetrahydrofolate is bound at residue 113–116 (SLLP).

This sequence belongs to the Fmt family.

It catalyses the reaction L-methionyl-tRNA(fMet) + (6R)-10-formyltetrahydrofolate = N-formyl-L-methionyl-tRNA(fMet) + (6S)-5,6,7,8-tetrahydrofolate + H(+). In terms of biological role, attaches a formyl group to the free amino group of methionyl-tRNA(fMet). The formyl group appears to play a dual role in the initiator identity of N-formylmethionyl-tRNA by promoting its recognition by IF2 and preventing the misappropriation of this tRNA by the elongation apparatus. In Pseudomonas aeruginosa (strain ATCC 15692 / DSM 22644 / CIP 104116 / JCM 14847 / LMG 12228 / 1C / PRS 101 / PAO1), this protein is Methionyl-tRNA formyltransferase.